The sequence spans 417 residues: Cobalamin binding intrinsic factor (417 aa).

An N-terminal signal peptide occupies residues 1-18 (MAWLTLYLLSVLWAVAGT). Cystine bridges form between Cys-26–Cys-246, Cys-103–Cys-288, and Cys-143–Cys-182. Residue Asp-171 coordinates cob(II)alamin. Position 191 is a phosphoserine (Ser-191). 2 residues coordinate cob(II)alamin: Asp-222 and Gln-270. Asn-311 and Asn-330 each carry an N-linked (GlcNAc...) asparagine glycan. Cob(II)alamin contacts are provided by residues 365–370 (SWGLIV) and 386–395 (WEFLSGKTPL). Asn-413 carries N-linked (GlcNAc...) asparagine glycosylation.

This sequence belongs to the eukaryotic cobalamin transport proteins family. In terms of assembly, interacts with CUBN (via CUB domains). In terms of tissue distribution, gastric mucosa.

Its subcellular location is the secreted. Functionally, promotes absorption of the essential vitamin cobalamin (Cbl) in the ileum. After interaction with CUBN, the CBLIF-cobalamin complex is internalized via receptor-mediated endocytosis. This chain is Cobalamin binding intrinsic factor (Cblif), found in Mus musculus (Mouse).